The following is a 231-amino-acid chain: Large ribosomal subunit protein uL1 (231 aa).

This sequence belongs to the universal ribosomal protein uL1 family. In terms of assembly, part of the 50S ribosomal subunit.

Its function is as follows. Binds directly to 23S rRNA. The L1 stalk is quite mobile in the ribosome, and is involved in E site tRNA release. In terms of biological role, protein L1 is also a translational repressor protein, it controls the translation of the L11 operon by binding to its mRNA. The chain is Large ribosomal subunit protein uL1 from Pseudomonas savastanoi pv. phaseolicola (strain 1448A / Race 6) (Pseudomonas syringae pv. phaseolicola (strain 1448A / Race 6)).